A 557-amino-acid chain; its full sequence is Dihydroxy-acid dehydratase (557 aa).

Residue D78 participates in Mg(2+) binding. C119 provides a ligand contact to [2Fe-2S] cluster. The Mg(2+) site is built by D120 and K121. Residue K121 is modified to N6-carboxylysine. Residue C192 coordinates [2Fe-2S] cluster. E442 is a binding site for Mg(2+). S468 serves as the catalytic Proton acceptor.

The protein belongs to the IlvD/Edd family. Homodimer. [2Fe-2S] cluster is required as a cofactor. The cofactor is Mg(2+).

The catalysed reaction is (2R)-2,3-dihydroxy-3-methylbutanoate = 3-methyl-2-oxobutanoate + H2O. It carries out the reaction (2R,3R)-2,3-dihydroxy-3-methylpentanoate = (S)-3-methyl-2-oxopentanoate + H2O. It functions in the pathway amino-acid biosynthesis; L-isoleucine biosynthesis; L-isoleucine from 2-oxobutanoate: step 3/4. Its pathway is amino-acid biosynthesis; L-valine biosynthesis; L-valine from pyruvate: step 3/4. Functions in the biosynthesis of branched-chain amino acids. Catalyzes the dehydration of (2R,3R)-2,3-dihydroxy-3-methylpentanoate (2,3-dihydroxy-3-methylvalerate) into 2-oxo-3-methylpentanoate (2-oxo-3-methylvalerate) and of (2R)-2,3-dihydroxy-3-methylbutanoate (2,3-dihydroxyisovalerate) into 2-oxo-3-methylbutanoate (2-oxoisovalerate), the penultimate precursor to L-isoleucine and L-valine, respectively. The protein is Dihydroxy-acid dehydratase of Bacillus cereus (strain AH187).